The following is a 350-amino-acid chain: Holliday junction branch migration complex subunit RuvB (350 aa).

The segment at 1–184 (MSKTPERLVT…FGIPIRLEFY (184 aa)) is large ATPase domain (RuvB-L). ATP contacts are provided by residues Leu23, Arg24, Gly65, Lys68, Thr69, Thr70, 131 to 133 (EDF), Arg174, Tyr184, and Arg221. Thr69 is a binding site for Mg(2+). Residues 185–255 (TIEELERIVL…LADKALSLLD (71 aa)) form a small ATPAse domain (RuvB-S) region. The tract at residues 258–350 (PIGLDQMDRR…GLFPDQSEED (93 aa)) is head domain (RuvB-H). DNA contacts are provided by Arg294, Arg313, and Arg318.

Belongs to the RuvB family. As to quaternary structure, homohexamer. Forms an RuvA(8)-RuvB(12)-Holliday junction (HJ) complex. HJ DNA is sandwiched between 2 RuvA tetramers; dsDNA enters through RuvA and exits via RuvB. An RuvB hexamer assembles on each DNA strand where it exits the tetramer. Each RuvB hexamer is contacted by two RuvA subunits (via domain III) on 2 adjacent RuvB subunits; this complex drives branch migration. In the full resolvosome a probable DNA-RuvA(4)-RuvB(12)-RuvC(2) complex forms which resolves the HJ.

Its subcellular location is the cytoplasm. The enzyme catalyses ATP + H2O = ADP + phosphate + H(+). Its function is as follows. The RuvA-RuvB-RuvC complex processes Holliday junction (HJ) DNA during genetic recombination and DNA repair, while the RuvA-RuvB complex plays an important role in the rescue of blocked DNA replication forks via replication fork reversal (RFR). RuvA specifically binds to HJ cruciform DNA, conferring on it an open structure. The RuvB hexamer acts as an ATP-dependent pump, pulling dsDNA into and through the RuvAB complex. RuvB forms 2 homohexamers on either side of HJ DNA bound by 1 or 2 RuvA tetramers; 4 subunits per hexamer contact DNA at a time. Coordinated motions by a converter formed by DNA-disengaged RuvB subunits stimulates ATP hydrolysis and nucleotide exchange. Immobilization of the converter enables RuvB to convert the ATP-contained energy into a lever motion, pulling 2 nucleotides of DNA out of the RuvA tetramer per ATP hydrolyzed, thus driving DNA branch migration. The RuvB motors rotate together with the DNA substrate, which together with the progressing nucleotide cycle form the mechanistic basis for DNA recombination by continuous HJ branch migration. Branch migration allows RuvC to scan DNA until it finds its consensus sequence, where it cleaves and resolves cruciform DNA. The chain is Holliday junction branch migration complex subunit RuvB from Beijerinckia indica subsp. indica (strain ATCC 9039 / DSM 1715 / NCIMB 8712).